A 631-amino-acid chain; its full sequence is Iron transport multicopper oxidase FET3 (631 aa).

Residues 1–25 (MKVSTHHFLPSLLVALWSWATVAQA) form the signal peptide. At 26–564 (ATHTFNWTTG…ANIPDGFTAK (539 aa)) the chain is on the extracellular side. Residues Asn-31 and Asn-81 are each glycosylated (N-linked (GlcNAc...) asparagine). Plastocyanin-like domains are found at residues 50-148 (ITCN…LVVE) and 195-297 (NLII…LMLN). Cu cation-binding residues include His-85 and His-87. 2 N-linked (GlcNAc...) asparagine glycosylation sites follow: Asn-92 and Asn-117. Cu cation is bound by residues His-130 and His-132. N-linked (GlcNAc...) asparagine glycosylation is found at Asn-199, Asn-203, Asn-249, Asn-270, Asn-297, Asn-364, and Asn-413. The 120-residue stretch at 387 to 506 (NPLVYGTNTN…QGLALLLIEA (120 aa)) folds into the Plastocyanin-like 3 domain. 7 residues coordinate Cu cation: His-418, His-421, His-423, His-488, Cys-489, His-490, and His-494. A helical membrane pass occupies residues 565–585 (GIVAMTFSCLAGVLGLISLST). At 586 to 630 (YGLMGVKKSEEEIIRDLGMDPDAVEKVDVSDINSDEDSSRTSKNI) the chain is on the cytoplasmic side. Positions 610–631 (EKVDVSDINSDEDSSRTSKNIE) are disordered. The segment covering 622–631 (DSSRTSKNIE) has biased composition (basic and acidic residues).

The protein belongs to the multicopper oxidase family. It depends on Cu cation as a cofactor.

The protein resides in the cell membrane. In terms of biological role, iron transport multicopper ferroxidase required for Fe(2+) high affinity uptake. Required to oxidize Fe(2+) and release it from the transporter. Essential component of copper-dependent iron transport. This Kluyveromyces lactis (strain ATCC 8585 / CBS 2359 / DSM 70799 / NBRC 1267 / NRRL Y-1140 / WM37) (Yeast) protein is Iron transport multicopper oxidase FET3 (FET3).